Here is a 577-residue protein sequence, read N- to C-terminus: Moesin (577 aa).

Residues 2 to 295 (PKTISVRVTT…GNHELYMRRR (294 aa)) enclose the FERM domain. The residue at position 74 (Ser-74) is a Phosphoserine. Lys-79 carries the N6-acetyllysine modification. At Lys-83 the chain carries N6-succinyllysine. The [IL]-x-C-x-x-[DE] motif motif lies at 115 to 120 (IYCPPE). Tyr-116 carries the phosphotyrosine modification. At Cys-117 the chain carries S-nitrosocysteine. 2 positions are modified to N6-acetyllysine: Lys-139 and Lys-165. Disordered stretches follow at residues 322–342 (LLEN…KIER), 358–453 (TKKA…QMVQ), and 468–549 (STPH…AENM). Residues 358–401 (TKKAQQELEEQTRRALELEQERKRAQSEAEKLAKERQEAEEAKE) show a composition bias toward basic and acidic residues. Ser-407 is modified (phosphoserine). Basic and acidic residues-rich tracts occupy residues 438–447 (KESEAEECHQ) and 492–519 (AELR…ERVQ). Position 527 is a phosphoserine (Ser-527). Basic and acidic residues predominate over residues 531–549 (NARDESKKTTNDMIHAENM). Thr-558 carries the phosphothreonine; by ROCK2 and STK10 modification.

As to quaternary structure, in resting T-cells, part of a PAG1-NHERF1-MSN complex which is disrupted upon TCR activation. Interacts with NHERF1. Interacts with PPP1R16B. Interacts with PDZD8. Interacts with SELPLG and SYK; these interactions mediate the activation of SYK by SELPLG. Interacts with PDPN (via cytoplasmic domain); this interaction activates RHOA and promotes epithelial-mesenchymal transition. Interacts with SPN/CD43 cytoplasmic tail. Interacts with CD44. Interacts with ICAM2. Interacts with ICAM3 (via C-terminus). Interacts with PDZD8. Interacts with F-actin. Interacts with CD46. Interacts with PTPN6. Phosphorylation on Thr-558 is crucial for the formation of microvilli-like structures. Phosphorylation by ROCK2 suppresses the head-to-tail association of the N-terminal and C-terminal halves resulting in an opened conformation which is capable of actin and membrane-binding. Phosphorylation on Thr-558 by STK10 negatively regulates lymphocyte migration and polarization. Post-translationally, S-nitrosylation of Cys-117 is induced by interferon-gamma and oxidatively-modified low-densitity lipoprotein (LDL(ox)) implicating the iNOS-S100A8/9 transnitrosylase complex.

It localises to the cell membrane. The protein resides in the cytoplasm. The protein localises to the cytoskeleton. It is found in the apical cell membrane. Its subcellular location is the cell projection. It localises to the microvillus membrane. The protein resides in the microvillus. A head-to-tail association, of the N-terminal and C-terminal halves results in a closed conformation (inactive form) which is incapable of actin or membrane-binding. Functionally, ezrin-radixin-moesin (ERM) family protein that connects the actin cytoskeleton to the plasma membrane and thereby regulates the structure and function of specific domains of the cell cortex. Tethers actin filaments by oscillating between a resting and an activated state providing transient interactions between moesin and the actin cytoskeleton. Once phosphorylated on its C-terminal threonine, moesin is activated leading to interaction with F-actin and cytoskeletal rearrangement. These rearrangements regulate many cellular processes, including cell shape determination, membrane transport, and signal transduction. The role of moesin is particularly important in immunity acting on both T and B-cells homeostasis and self-tolerance, regulating lymphocyte egress from lymphoid organs. Modulates phagolysosomal biogenesis in macrophages. Participates also in immunologic synapse formation. This Rattus norvegicus (Rat) protein is Moesin.